The chain runs to 176 residues: CDP-archaeol synthase (176 aa).

The next 4 helical transmembrane spans lie at 41-61, 73-93, 114-134, and 138-158; these read GLIG…FLYN, IITV…KSYF, VVGS…LNWF, and FDSV…SPLL.

It belongs to the CDP-archaeol synthase family. Requires Mg(2+) as cofactor.

The protein resides in the cell membrane. The enzyme catalyses 2,3-bis-O-(geranylgeranyl)-sn-glycerol 1-phosphate + CTP + H(+) = CDP-2,3-bis-O-(geranylgeranyl)-sn-glycerol + diphosphate. The protein operates within membrane lipid metabolism; glycerophospholipid metabolism. Catalyzes the formation of CDP-2,3-bis-(O-geranylgeranyl)-sn-glycerol (CDP-archaeol) from 2,3-bis-(O-geranylgeranyl)-sn-glycerol 1-phosphate (DGGGP) and CTP. This reaction is the third ether-bond-formation step in the biosynthesis of archaeal membrane lipids. This Methanocorpusculum labreanum (strain ATCC 43576 / DSM 4855 / Z) protein is CDP-archaeol synthase.